A 93-amino-acid chain; its full sequence is Phosphoribosyl-ATP pyrophosphatase (93 aa).

The protein belongs to the PRA-PH family.

It localises to the cytoplasm. The catalysed reaction is 1-(5-phospho-beta-D-ribosyl)-ATP + H2O = 1-(5-phospho-beta-D-ribosyl)-5'-AMP + diphosphate + H(+). It functions in the pathway amino-acid biosynthesis; L-histidine biosynthesis; L-histidine from 5-phospho-alpha-D-ribose 1-diphosphate: step 2/9. This chain is Phosphoribosyl-ATP pyrophosphatase, found in Mycobacterium leprae (strain Br4923).